The sequence spans 285 residues: NAD kinase (285 aa).

The Proton acceptor role is filled by D66. NAD(+) is bound by residues D66–G67, N137–D138, R148, R165, D167, and T178–S183.

The protein belongs to the NAD kinase family. A divalent metal cation serves as cofactor.

It is found in the cytoplasm. The catalysed reaction is NAD(+) + ATP = ADP + NADP(+) + H(+). Involved in the regulation of the intracellular balance of NAD and NADP, and is a key enzyme in the biosynthesis of NADP. Catalyzes specifically the phosphorylation on 2'-hydroxyl of the adenosine moiety of NAD to yield NADP. The polypeptide is NAD kinase (Prosthecochloris aestuarii (strain DSM 271 / SK 413)).